Reading from the N-terminus, the 249-residue chain is Flavodoxin/ferredoxin--NADP reductase (249 aa).

The FAD-binding FR-type domain maps to Asn-2–Asn-102. Residues Arg-51–Ser-54, Tyr-67, Gln-75–Thr-77, and Thr-117 each bind FAD. Residues Val-144–Arg-145, Ser-174–Arg-175, Arg-185, and Asn-215–Asp-217 each bind NADP(+). Tyr-248–Trp-249 is an FAD binding site.

It belongs to the ferredoxin--NADP reductase type 1 family. The cofactor is FAD.

It is found in the cytoplasm. The enzyme catalyses 2 reduced [2Fe-2S]-[ferredoxin] + NADP(+) + H(+) = 2 oxidized [2Fe-2S]-[ferredoxin] + NADPH. The catalysed reaction is reduced [flavodoxin] + NADP(+) = oxidized [flavodoxin] + NADPH + 2 H(+). In terms of biological role, transports electrons between flavodoxin or ferredoxin and NADPH. The sequence is that of Flavodoxin/ferredoxin--NADP reductase (fpr) from Buchnera aphidicola subsp. Baizongia pistaciae (strain Bp).